We begin with the raw amino-acid sequence, 131 residues long: Cytochrome c-552 (131 aa).

Heme c is bound by residues Cys11, Cys14, His15, and Met69.

In terms of processing, binds 1 heme c group covalently per subunit.

Its function is as follows. This monoheme basic protein appears to function as an electron donor to cytochrome oxidase in T.thermophilus. The sequence is that of Cytochrome c-552 (cycA) from Thermus thermophilus.